Reading from the N-terminus, the 134-residue chain is Cytochrome b (134 aa).

Helical transmembrane passes span 33-53 (FGSLLGVCLATQILTGLFLAM), 77-98 (WILRYLHANGASMFFICLFLHV), and 113-133 (WNIGIILLFAVMATAFMGYVL). Heme b-binding residues include His-83 and His-97.

It belongs to the cytochrome b family. As to quaternary structure, the cytochrome bc1 complex contains 11 subunits: 3 respiratory subunits (MT-CYB, CYC1 and UQCRFS1), 2 core proteins (UQCRC1 and UQCRC2) and 6 low-molecular weight proteins (UQCRH/QCR6, UQCRB/QCR7, UQCRQ/QCR8, UQCR10/QCR9, UQCR11/QCR10 and a cleavage product of UQCRFS1). This cytochrome bc1 complex then forms a dimer. The cofactor is heme b.

The protein resides in the mitochondrion inner membrane. Component of the ubiquinol-cytochrome c reductase complex (complex III or cytochrome b-c1 complex) that is part of the mitochondrial respiratory chain. The b-c1 complex mediates electron transfer from ubiquinol to cytochrome c. Contributes to the generation of a proton gradient across the mitochondrial membrane that is then used for ATP synthesis. This chain is Cytochrome b (MT-CYB), found in Rhinolophus hipposideros (Lesser horseshoe bat).